The sequence spans 957 residues: Bifunctional glutamine synthetase adenylyltransferase/adenylyl-removing enzyme (957 aa).

The segment at M1–E447 is adenylyl removase. An adenylyl transferase region spans residues V454–E957.

Belongs to the GlnE family. Requires Mg(2+) as cofactor.

It carries out the reaction [glutamine synthetase]-O(4)-(5'-adenylyl)-L-tyrosine + phosphate = [glutamine synthetase]-L-tyrosine + ADP. The catalysed reaction is [glutamine synthetase]-L-tyrosine + ATP = [glutamine synthetase]-O(4)-(5'-adenylyl)-L-tyrosine + diphosphate. In terms of biological role, involved in the regulation of glutamine synthetase GlnA, a key enzyme in the process to assimilate ammonia. When cellular nitrogen levels are high, the C-terminal adenylyl transferase (AT) inactivates GlnA by covalent transfer of an adenylyl group from ATP to specific tyrosine residue of GlnA, thus reducing its activity. Conversely, when nitrogen levels are low, the N-terminal adenylyl removase (AR) activates GlnA by removing the adenylyl group by phosphorolysis, increasing its activity. The regulatory region of GlnE binds the signal transduction protein PII (GlnB) which indicates the nitrogen status of the cell. The polypeptide is Bifunctional glutamine synthetase adenylyltransferase/adenylyl-removing enzyme (Haemophilus ducreyi (strain 35000HP / ATCC 700724)).